Here is a 308-residue protein sequence, read N- to C-terminus: tRNA dimethylallyltransferase (308 aa).

11 to 18 (GPTGIGKT) is a binding site for ATP. 13-18 (TGIGKT) is a substrate binding site. An interaction with substrate tRNA region spans residues 36–39 (DSMQ).

The protein belongs to the IPP transferase family. Monomer. It depends on Mg(2+) as a cofactor.

The enzyme catalyses adenosine(37) in tRNA + dimethylallyl diphosphate = N(6)-dimethylallyladenosine(37) in tRNA + diphosphate. Catalyzes the transfer of a dimethylallyl group onto the adenine at position 37 in tRNAs that read codons beginning with uridine, leading to the formation of N6-(dimethylallyl)adenosine (i(6)A). This chain is tRNA dimethylallyltransferase, found in Lactobacillus gasseri (strain ATCC 33323 / DSM 20243 / BCRC 14619 / CIP 102991 / JCM 1131 / KCTC 3163 / NCIMB 11718 / NCTC 13722 / AM63).